Consider the following 445-residue polypeptide: tRNA modification GTPase MnmE (445 aa).

3 residues coordinate (6S)-5-formyl-5,6,7,8-tetrahydrofolate: Arg20, Glu79, and Lys119. One can recognise a TrmE-type G domain in the interval 215-371 (GLKLAIIGPP…ILKNIENIAE (157 aa)). Asn225 contributes to the K(+) binding site. Residues 225–230 (NVGKSS), 244–250 (SNIAGTT), and 269–272 (DTAG) each bind GTP. Ser229 is a binding site for Mg(2+). K(+)-binding residues include Ser244, Ile246, and Thr249. Thr250 contributes to the Mg(2+) binding site. Residue Lys445 coordinates (6S)-5-formyl-5,6,7,8-tetrahydrofolate.

Belongs to the TRAFAC class TrmE-Era-EngA-EngB-Septin-like GTPase superfamily. TrmE GTPase family. In terms of assembly, homodimer. Heterotetramer of two MnmE and two MnmG subunits. The cofactor is K(+).

It localises to the cytoplasm. Functionally, exhibits a very high intrinsic GTPase hydrolysis rate. Involved in the addition of a carboxymethylaminomethyl (cmnm) group at the wobble position (U34) of certain tRNAs, forming tRNA-cmnm(5)s(2)U34. The chain is tRNA modification GTPase MnmE from Rickettsia conorii (strain ATCC VR-613 / Malish 7).